A 154-amino-acid chain; its full sequence is Myoglobin (154 aa).

Residues 2-148 (GLSDGEWQLV…FRNDIAAKYK (147 aa)) form the Globin domain. Ser-4 is modified (phosphoserine). A nitrite-binding site is contributed by His-65. His-65 is a binding site for O2. Phosphothreonine is present on Thr-68. His-94 serves as a coordination point for heme b.

This sequence belongs to the globin family. Monomeric.

The protein localises to the cytoplasm. The protein resides in the sarcoplasm. It catalyses the reaction Fe(III)-heme b-[protein] + nitric oxide + H2O = Fe(II)-heme b-[protein] + nitrite + 2 H(+). The enzyme catalyses H2O2 + AH2 = A + 2 H2O. Its function is as follows. Monomeric heme protein which primary function is to store oxygen and facilitate its diffusion within muscle tissues. Reversibly binds oxygen through a pentacoordinated heme iron and enables its timely and efficient release as needed during periods of heightened demand. Depending on the oxidative conditions of tissues and cells, and in addition to its ability to bind oxygen, it also has a nitrite reductase activity whereby it regulates the production of bioactive nitric oxide. Under stress conditions, like hypoxia and anoxia, it also protects cells against reactive oxygen species thanks to its pseudoperoxidase activity. The polypeptide is Myoglobin (MB) (Vulpes chama (Cape fox)).